Consider the following 247-residue polypeptide: MQVEEYLNDIAEREGTVHLTLIDPASQSPEAAAEIAKAAVAGGTDAILIGGSTGAVGVALDQTLIKIKEQVDVPTILFPGNAGGVSTHADAIFFMSLLNSRDINYIITNQVMGAPVVYKSGIEPISMAYIISEPGGTVGWVGDAKLIPRNKPEIAAAYSLAGKYMGMHYTYLEAGSGADRPITPETIGAVKHVLGDNKLIVGGGIRDGKTAKICADAGADMIVTGTIVEETDDVRKKIEEIVSAIKK.

Aspartate 23 and serine 52 together coordinate Mg(2+). Residues 171-177 (YLEAGSG), 203-204 (GG), and 225-226 (GT) contribute to the sn-glycerol 1-phosphate site.

The protein belongs to the GGGP/HepGP synthase family. Group II subfamily. Requires Mg(2+) as cofactor.

Its subcellular location is the cytoplasm. The catalysed reaction is sn-glycerol 1-phosphate + (2E,6E,10E)-geranylgeranyl diphosphate = sn-3-O-(geranylgeranyl)glycerol 1-phosphate + diphosphate. It participates in membrane lipid metabolism; glycerophospholipid metabolism. In terms of biological role, prenyltransferase that catalyzes the transfer of the geranylgeranyl moiety of geranylgeranyl diphosphate (GGPP) to the C3 hydroxyl of sn-glycerol-1-phosphate (G1P). This reaction is the first ether-bond-formation step in the biosynthesis of archaeal membrane lipids. The chain is Geranylgeranylglyceryl phosphate synthase from Methanococcoides burtonii (strain DSM 6242 / NBRC 107633 / OCM 468 / ACE-M).